The primary structure comprises 1189 residues: Pumilio homolog 1 (1189 aa).

Disordered regions lie at residues 24–65, 233–288, 491–525, 614–652, and 743–774; these read QHAQ…SSPV, SCLR…QNGI, QQTT…GQQT, AGTT…NNSL, and GPVG…SSLN. Residues 45 to 58 are compositionally biased toward low complexity; it reads QAQPQPAANQALAA. The segment covering 250–277 has biased composition (basic and acidic residues); the sequence is NDKGDKKNKGTFDGDKLGDLKEEGDVMD. Residues 491–503 show a composition bias toward low complexity; that stretch reads QQTTQQTQQGQQQ. The span at 512 to 525 shows a compositional bias: polar residues; that stretch reads RPLTPNQNQQGQQT. Composition is skewed to low complexity over residues 627 to 652 and 764 to 774; these read QQPQ…NNSL and LSSHGSSSSLN. In terms of domain architecture, PUM-HD spans 829-1171; the sequence is GRSRLLEDFR…HILAKLEKYY (343 aa). Pumilio repeat units lie at residues 849–884, 885–920, 921–958, 959–994, 995–1030, 1031–1066, 1067–1102, and 1106–1145; these read EIAG…LVFN, EILQ…ALAE, RIRG…EMVR, ELDG…FIID, AFKG…PILE, ELHQ…KIVA, EIRG…MLID, and TMND…IVMH. The tract at residues 864–868 is adenine-nucleotide binding in RNA target; that stretch reads SRFIQ. Residues 900 to 904 form a uracil-nucleotide binding in RNA target region; sequence NYVIQ. Positions 936–940 are adenine-nucleotide binding in RNA target; the sequence is CRVIQ. Residues 974 to 978 form a non-specific-nucleotide binding in RNA target region; sequence NHVVQ. The segment at 1010–1014 is adenine-nucleotide binding in RNA target; that stretch reads CRVIQ. A uracil-nucleotide binding in RNA target region spans residues 1046-1050; that stretch reads NYVIQ. 2 guanine-nucleotide binding in RNA target regions span residues 1082–1086 and 1083–1086; these read SNVVE and NVVE. The tract at residues 1125-1129 is uracil-nucleotide binding in RNA target; the sequence is NYVVQ.

As to expression, detected in embryonic male and female gonads, heart, liver and muscle. Detected in adult brain, testis, ovary, heart, lung, spleen, kidney and muscle.

It localises to the cytoplasm. The protein resides in the P-body. Its subcellular location is the cytoplasmic granule. Sequence-specific RNA-binding protein that acts as a post-transcriptional repressor by binding the 3'-UTR of mRNA targets. Binds to an RNA consensus sequence, the Pumilio Response Element (PRE), 5'-UGUANAUA-3', that is related to the Nanos Response Element (NRE). Mediates post-transcriptional repression of transcripts via different mechanisms: acts via direct recruitment of the CCR4-POP2-NOT deadenylase leading to translational inhibition and mRNA degradation. Also mediates deadenylation-independent repression by promoting accessibility of miRNAs. The protein is Pumilio homolog 1 (PUM1) of Gallus gallus (Chicken).